The sequence spans 528 residues: Berberine bridge enzyme-like 17 (528 aa).

The signal sequence occupies residues 1–19 (MKEVVYVLLLVLLVSVSDA). N-linked (GlcNAc...) asparagine glycosylation is found at Asn20, Asn35, Asn52, and Asn72. Cys32 and Cys94 are oxidised to a cystine. One can recognise an FAD-binding PCMH-type domain in the interval 69-246 (LNPNDTKLIA…LSWKINLVDV (178 aa)). Residues 109-171 (HDYEGLSFTS…KTLAFAGGVC (63 aa)) constitute a cross-link (6-(S-cysteinyl)-8alpha-(pros-histidyl)-FAD (His-Cys)). 3 N-linked (GlcNAc...) asparagine glycosylation sites follow: Asn256, Asn340, and Asn439.

The protein belongs to the oxygen-dependent FAD-linked oxidoreductase family. It depends on FAD as a cofactor. Post-translationally, the FAD cofactor is bound via a bicovalent 6-S-cysteinyl, 8alpha-N1-histidyl FAD linkage.

Its subcellular location is the secreted. The protein resides in the cell wall. In Arabidopsis thaliana (Mouse-ear cress), this protein is Berberine bridge enzyme-like 17.